A 139-amino-acid chain; its full sequence is Prostate-associated microseminoprotein (139 aa).

An N-terminal signal peptide occupies residues 1–35 (MALRMLWAGQAKGILGGWRTICLVVSLFLQHPGVS). 5 disulfides stabilise this stretch: Cys-38–Cys-78, Cys-46–Cys-69, Cys-64–Cys-100, Cys-67–Cys-77, and Cys-91–Cys-114. A disordered region spans residues 116–139 (GGGPDLEWGSANTPAPGASAPHSS).

The protein belongs to the beta-microseminoprotein family.

The protein resides in the secreted. In terms of biological role, acts as a ligand for C-C chemokine receptor CCR2. Signals through binding and activation of CCR2 and induces a strong chemotactic response and mobilization of intracellular calcium ions. Exhibits a chemotactic activity for monocytes and lymphocytes but not neutrophils. This chain is Prostate-associated microseminoprotein (Msmp), found in Mus musculus (Mouse).